We begin with the raw amino-acid sequence, 286 residues long: MDHKKTWHEKLYCHLGQYFLIEKMLYKKKTPHHQVMIFKNSVFGKIMVIDDIVQTTERDEFIYHEMLTHVPIIAHGSIKSVLIIGGGDGGILREVCRYKMIENITMVEIDVNIIDLCKKYFPNHSNQAYQDSRLNLIIDDGLNFIKRTKEKFDLIISDSTDPIGCGKNLFRSEFYFNCKNHLEENGIFVAQNGVFFLQKNETILTYKNLKKYFYDTRFYQANVPTYYGGVMVFAWGTNNIEYRKNSLEKIQIRIKNTKLDFNYYNAKIHISSFYLPQYILNELNES.

One can recognise a PABS domain in the interval 5-238 (KTWHEKLYCH…GVMVFAWGTN (234 aa)). His-64 and Asp-88 together coordinate spermidine. S-methyl-5'-thioadenosine is bound by residues Glu-108 and 140–141 (DG). Asp-158 (proton acceptor) is an active-site residue. Residue 158-161 (DSTD) participates in spermidine binding.

It belongs to the spermidine/spermine synthase family. In terms of assembly, homodimer or homotetramer.

Its subcellular location is the cytoplasm. It carries out the reaction S-adenosyl 3-(methylsulfanyl)propylamine + putrescine = S-methyl-5'-thioadenosine + spermidine + H(+). It functions in the pathway amine and polyamine biosynthesis; spermidine biosynthesis; spermidine from putrescine: step 1/1. Catalyzes the irreversible transfer of a propylamine group from the amino donor S-adenosylmethioninamine (decarboxy-AdoMet) to putrescine (1,4-diaminobutane) to yield spermidine. The sequence is that of Polyamine aminopropyltransferase from Buchnera aphidicola subsp. Acyrthosiphon pisum (strain 5A).